The primary structure comprises 770 residues: Low-density lipoprotein receptor-related protein 3 (770 aa).

Positions 1 to 36 (MEKRAAAGPEGAPGARAPLAVVCLVNLFLTGRLSSA) are cleaved as a signal peptide. Residues 37–496 (VPALAACSGK…HGCLAAVPRK (460 aa)) lie on the Extracellular side of the membrane. 9 disulfides stabilise this stretch: Cys43–Cys72, Cys99–Cys120, Cys166–Cys178, Cys173–Cys191, Cys185–Cys200, Cys212–Cys227, Cys219–Cys240, Cys234–Cys249, and Cys254–Cys282. The CUB 1 domain maps to 43–159 (CSGKLEQHTE…QGFRLSYIRG (117 aa)). Residue Asn71 is glycosylated (N-linked (GlcNAc...) asparagine). LDL-receptor class A domains lie at 165–201 (SCQTDEFRCDNGKCLPGPWQCNMVDECGDGSDEGNCS) and 211–250 (LCPGGTFPCSGARSTRCLPVERRCDGTQDCGDGSDEAGCP). Asn199 carries an N-linked (GlcNAc...) asparagine glycan. Residues 254–365 (CGRRLGSFYG…HGFNATYQVK (112 aa)) form the CUB 2 domain. Asn359 carries N-linked (GlcNAc...) asparagine glycosylation. LDL-receptor class A domains are found at residues 415–453 (ACPPDQYPCEGGSGLCYAPADRCNNQKSCPDGADEKNCF) and 454–490 (SCQPGTFHCGTNLCIFETWRCDGQEDCQDGSDEHGCL). Cystine bridges form between Cys416/Cys430, Cys423/Cys443, Cys437/Cys452, Cys455/Cys467, Cys462/Cys480, and Cys474/Cys489. Residues 497 to 517 (VITAALIGSLVCGLLLVIALG) form a helical membrane-spanning segment. At 518-770 (CAFKLYSLRT…ASDDEALLVC (253 aa)) the chain is on the cytoplasmic side. A disordered region spans residues 639–753 (LLQAAPGPVP…PLGVCRSPPP (115 aa)). Basic and acidic residues predominate over residues 689–703 (RDPEYRPEDKERKAC).

This sequence belongs to the LDLR family. In terms of assembly, binds GGA1 and GGA2.

The protein resides in the membrane. The protein localises to the coated pit. Functionally, probable receptor, which may be involved in the internalization of lipophilic molecules and/or signal transduction. Its precise role is however unclear, since it does not bind to very low density lipoprotein (VLDL) or to LRPAP1 in vitro. In Rattus norvegicus (Rat), this protein is Low-density lipoprotein receptor-related protein 3 (Lrp3).